We begin with the raw amino-acid sequence, 108 residues long: Ferredoxin, plant-type (108 aa).

Positions 5–96 constitute a 2Fe-2S ferredoxin-type domain; it reads FEITVQPGGE…DLCIERYSKP (92 aa). The [2Fe-2S] cluster site is built by C40, C45, C48, and C80.

It belongs to the 2Fe2S plant-type ferredoxin family.

It participates in aromatic compound metabolism; catechol degradation. Ferredoxins are iron-sulfur proteins that transfer electrons in a wide variety of metabolic reactions. This Pseudomonas putida (Arthrobacter siderocapsulatus) protein is Ferredoxin, plant-type (nahT).